A 382-amino-acid chain; its full sequence is 1-deoxy-D-xylulose 5-phosphate reductoisomerase (382 aa).

NADPH contacts are provided by T10, G11, S12, I13, G36, and N122. K123 serves as a coordination point for 1-deoxy-D-xylulose 5-phosphate. E124 lines the NADPH pocket. Residue D148 participates in Mn(2+) binding. S149, E150, S174, and H197 together coordinate 1-deoxy-D-xylulose 5-phosphate. E150 contributes to the Mn(2+) binding site. Position 203 (G203) interacts with NADPH. Residues S210, N215, K216, and E219 each contribute to the 1-deoxy-D-xylulose 5-phosphate site. E219 provides a ligand contact to Mn(2+).

The protein belongs to the DXR family. Requires Mg(2+) as cofactor. It depends on Mn(2+) as a cofactor.

The catalysed reaction is 2-C-methyl-D-erythritol 4-phosphate + NADP(+) = 1-deoxy-D-xylulose 5-phosphate + NADPH + H(+). It participates in isoprenoid biosynthesis; isopentenyl diphosphate biosynthesis via DXP pathway; isopentenyl diphosphate from 1-deoxy-D-xylulose 5-phosphate: step 1/6. Its function is as follows. Catalyzes the NADPH-dependent rearrangement and reduction of 1-deoxy-D-xylulose-5-phosphate (DXP) to 2-C-methyl-D-erythritol 4-phosphate (MEP). The polypeptide is 1-deoxy-D-xylulose 5-phosphate reductoisomerase (Prosthecochloris aestuarii (strain DSM 271 / SK 413)).